Reading from the N-terminus, the 427-residue chain is Histidine--tRNA ligase (427 aa).

The protein belongs to the class-II aminoacyl-tRNA synthetase family. As to quaternary structure, homodimer.

It localises to the cytoplasm. The enzyme catalyses tRNA(His) + L-histidine + ATP = L-histidyl-tRNA(His) + AMP + diphosphate + H(+). The chain is Histidine--tRNA ligase from Alteromonas mediterranea (strain DSM 17117 / CIP 110805 / LMG 28347 / Deep ecotype).